A 714-amino-acid polypeptide reads, in one-letter code: Polyribonucleotide nucleotidyltransferase (714 aa).

2 residues coordinate Mg(2+): D489 and D495. The 60-residue stretch at 556-615 (PKIDTIKIDVDKIKVVIGKGGETIDKIIAETGVKIDIDEEGNVSIYSSDQDAINRAKEII) folds into the KH domain. Residues 625-693 (GEVYHAKVVR…DKGRIDASMK (69 aa)) form the S1 motif domain. The disordered stretch occupies residues 691 to 714 (SMKALVPRPPKPEKSEAKKEGKHD). Residues 700-714 (PKPEKSEAKKEGKHD) are compositionally biased toward basic and acidic residues.

The protein belongs to the polyribonucleotide nucleotidyltransferase family. It depends on Mg(2+) as a cofactor.

The protein localises to the cytoplasm. The enzyme catalyses RNA(n+1) + phosphate = RNA(n) + a ribonucleoside 5'-diphosphate. Functionally, involved in mRNA degradation. Catalyzes the phosphorolysis of single-stranded polyribonucleotides processively in the 3'- to 5'-direction. This chain is Polyribonucleotide nucleotidyltransferase, found in Streptococcus equi subsp. zooepidemicus (strain H70).